The chain runs to 300 residues: Probable protein phosphatase 2C 2 (300 aa).

The region spanning 23–298 (IFAASEMQGW…DNMTTILVYL (276 aa)) is the PPM-type phosphatase domain. Residues aspartate 57, glycine 58, aspartate 237, and aspartate 289 each coordinate Mn(2+).

The protein belongs to the PP2C family. It depends on Mg(2+) as a cofactor. Requires Mn(2+) as cofactor.

The protein localises to the membrane. The catalysed reaction is O-phospho-L-seryl-[protein] + H2O = L-seryl-[protein] + phosphate. It catalyses the reaction O-phospho-L-threonyl-[protein] + H2O = L-threonyl-[protein] + phosphate. Functionally, enzyme with a broad specificity. This is Probable protein phosphatase 2C 2 from Paramecium tetraurelia.